The sequence spans 189 residues: Testis-expressed protein 22 (189 aa).

The disordered stretch occupies residues 1-120 (MDSRQQRPQR…TQSVPTPPLQ (120 aa)). The segment covering 14–24 (QWQLAQEQRQQ) has biased composition (low complexity). Over residues 70–87 (IDERRRLALQRMQERTDT) the composition is skewed to basic and acidic residues. A compositionally biased stretch (low complexity) spans 103–114 (QQTETSPSTQSV).

In terms of tissue distribution, mainly expressed in spermatocytes and spermatids in testis.

The protein localises to the cytoplasm. It is found in the cytoplasmic vesicle. It localises to the secretory vesicle. Its subcellular location is the acrosome. The polypeptide is Testis-expressed protein 22 (Tex22) (Mus musculus (Mouse)).